Reading from the N-terminus, the 65-residue chain is uncharacterized protein (65 aa).

This is an uncharacterized protein from Mycobacterium tuberculosis (strain ATCC 25618 / H37Rv).